A 315-amino-acid polypeptide reads, in one-letter code: 4-hydroxy-3-methylbut-2-enyl diphosphate reductase (315 aa).

Cys-12 is a binding site for [4Fe-4S] cluster. (2E)-4-hydroxy-3-methylbut-2-enyl diphosphate-binding residues include His-43 and His-81. Dimethylallyl diphosphate contacts are provided by His-43 and His-81. Isopentenyl diphosphate is bound by residues His-43 and His-81. Cys-103 serves as a coordination point for [4Fe-4S] cluster. His-131 contacts (2E)-4-hydroxy-3-methylbut-2-enyl diphosphate. His-131 provides a ligand contact to dimethylallyl diphosphate. Isopentenyl diphosphate is bound at residue His-131. Glu-133 acts as the Proton donor in catalysis. Thr-170 is a (2E)-4-hydroxy-3-methylbut-2-enyl diphosphate binding site. Residue Cys-198 participates in [4Fe-4S] cluster binding. The (2E)-4-hydroxy-3-methylbut-2-enyl diphosphate site is built by Ser-226, Asn-228, and Ser-271. 3 residues coordinate dimethylallyl diphosphate: Ser-226, Asn-228, and Ser-271. Isopentenyl diphosphate-binding residues include Ser-226, Asn-228, and Ser-271.

This sequence belongs to the IspH family. Requires [4Fe-4S] cluster as cofactor.

The enzyme catalyses isopentenyl diphosphate + 2 oxidized [2Fe-2S]-[ferredoxin] + H2O = (2E)-4-hydroxy-3-methylbut-2-enyl diphosphate + 2 reduced [2Fe-2S]-[ferredoxin] + 2 H(+). It catalyses the reaction dimethylallyl diphosphate + 2 oxidized [2Fe-2S]-[ferredoxin] + H2O = (2E)-4-hydroxy-3-methylbut-2-enyl diphosphate + 2 reduced [2Fe-2S]-[ferredoxin] + 2 H(+). The protein operates within isoprenoid biosynthesis; dimethylallyl diphosphate biosynthesis; dimethylallyl diphosphate from (2E)-4-hydroxy-3-methylbutenyl diphosphate: step 1/1. It participates in isoprenoid biosynthesis; isopentenyl diphosphate biosynthesis via DXP pathway; isopentenyl diphosphate from 1-deoxy-D-xylulose 5-phosphate: step 6/6. In terms of biological role, catalyzes the conversion of 1-hydroxy-2-methyl-2-(E)-butenyl 4-diphosphate (HMBPP) into a mixture of isopentenyl diphosphate (IPP) and dimethylallyl diphosphate (DMAPP). Acts in the terminal step of the DOXP/MEP pathway for isoprenoid precursor biosynthesis. This is 4-hydroxy-3-methylbut-2-enyl diphosphate reductase from Geobacillus sp. (strain WCH70).